A 195-amino-acid polypeptide reads, in one-letter code: Peptidyl-tRNA hydrolase (195 aa).

Residue Tyr-18 participates in tRNA binding. His-23 acts as the Proton acceptor in catalysis. TRNA contacts are provided by Tyr-69, Asn-71, and Asn-117.

This sequence belongs to the PTH family. As to quaternary structure, monomer.

It is found in the cytoplasm. It carries out the reaction an N-acyl-L-alpha-aminoacyl-tRNA + H2O = an N-acyl-L-amino acid + a tRNA + H(+). Functionally, hydrolyzes ribosome-free peptidyl-tRNAs (with 1 or more amino acids incorporated), which drop off the ribosome during protein synthesis, or as a result of ribosome stalling. Catalyzes the release of premature peptidyl moieties from peptidyl-tRNA molecules trapped in stalled 50S ribosomal subunits, and thus maintains levels of free tRNAs and 50S ribosomes. This chain is Peptidyl-tRNA hydrolase, found in Nitrosomonas eutropha (strain DSM 101675 / C91 / Nm57).